We begin with the raw amino-acid sequence, 74 residues long: UPF0248 protein MK0350 (74 aa).

Belongs to the UPF0248 family.

This is UPF0248 protein MK0350 from Methanopyrus kandleri (strain AV19 / DSM 6324 / JCM 9639 / NBRC 100938).